Consider the following 421-residue polypeptide: Phosphoglycerate kinase, cytosolic (421 aa).

(2R)-3-phosphoglycerate is bound by residues valine 23, aspartate 24, phenylalanine 25, asparagine 26, arginine 39, serine 61, histidine 62, glycine 64, arginine 65, arginine 135, histidine 172, and arginine 173. Positions 218 and 219 each coordinate ADP. Residue glycine 218 participates in CDP binding. AMP is bound by residues alanine 219 and lysine 220. Alanine 219 lines the ATP pocket. Alanine 219 contacts Mg(2+). Lysine 220 contacts (2R)-3-phosphoglycerate. Aspartate 223 contributes to the CDP binding site. A Mg(2+)-binding site is contributed by aspartate 223. Positions 224 and 242 each coordinate ADP. Residue lysine 224 coordinates AMP. Lysine 224 contacts ATP. A CDP-binding site is contributed by glycine 242. AMP contacts are provided by alanine 243 and alanine 315. Alanine 243 and alanine 315 together coordinate ATP. Alanine 315 and asparagine 339 together coordinate ADP. CDP contacts are provided by glycine 340 and phenylalanine 345. ADP contacts are provided by phenylalanine 345, glutamate 346, aspartate 378, and serine 379. Glutamate 346 is a binding site for AMP. The ATP site is built by glutamate 346, aspartate 378, and serine 379. Aspartate 378 is a Mg(2+) binding site.

This sequence belongs to the phosphoglycerate kinase family. In terms of assembly, monomer. Requires Mg(2+) as cofactor.

It localises to the cytoplasm. The catalysed reaction is (2R)-3-phosphoglycerate + ATP = (2R)-3-phospho-glyceroyl phosphate + ADP. The protein operates within carbohydrate degradation; glycolysis; pyruvate from D-glyceraldehyde 3-phosphate: step 2/5. The protein is Phosphoglycerate kinase, cytosolic of Trypanosoma brucei brucei.